We begin with the raw amino-acid sequence, 175 residues long: Nucleoside triphosphate/diphosphate phosphatase (175 aa).

The active-site Proton donor is the R23. Mg(2+) contacts are provided by N87, D103, D105, D107, D120, and E123.

Belongs to the Ntdp family. Requires Mg(2+) as cofactor.

The catalysed reaction is a ribonucleoside 5'-triphosphate + H2O = a ribonucleoside 5'-diphosphate + phosphate + H(+). The enzyme catalyses a ribonucleoside 5'-diphosphate + H2O = a ribonucleoside 5'-phosphate + phosphate + H(+). Its function is as follows. Has nucleoside phosphatase activity towards nucleoside triphosphates and nucleoside diphosphates. This is Nucleoside triphosphate/diphosphate phosphatase from Shouchella clausii (strain KSM-K16) (Alkalihalobacillus clausii).